Reading from the N-terminus, the 418-residue chain is Tyrosine--tRNA ligase (418 aa).

Tyr34 is an L-tyrosine binding site. Positions 39 to 48 (PTADSLHLGH) match the 'HIGH' region motif. Positions 169 and 173 each coordinate L-tyrosine. The 'KMSKS' region motif lies at 229 to 233 (KFGKS). Lys232 is an ATP binding site. The S4 RNA-binding domain occupies 352–418 (NNIVELLVSS…GKKKYFVLTY (67 aa)).

This sequence belongs to the class-I aminoacyl-tRNA synthetase family. TyrS type 1 subfamily. Homodimer.

It localises to the cytoplasm. It carries out the reaction tRNA(Tyr) + L-tyrosine + ATP = L-tyrosyl-tRNA(Tyr) + AMP + diphosphate + H(+). Catalyzes the attachment of tyrosine to tRNA(Tyr) in a two-step reaction: tyrosine is first activated by ATP to form Tyr-AMP and then transferred to the acceptor end of tRNA(Tyr). This is Tyrosine--tRNA ligase from Streptococcus pneumoniae serotype 19F (strain G54).